A 187-amino-acid polypeptide reads, in one-letter code: POM121 and ZP3 fusion protein (187 aa).

The tract at residues 166 to 187 (GTPSHSRRQPRVVSQWSTSASL) is disordered. Over residues 177 to 187 (VVSQWSTSASL) the composition is skewed to polar residues.

In terms of tissue distribution, expressed in spleen, thymus, pancreas, testis, ovary, small intestine, colon and lymphocytes.

The protein is POM121 and ZP3 fusion protein (POMZP3) of Homo sapiens (Human).